Consider the following 711-residue polypeptide: Polyribonucleotide nucleotidyltransferase (711 aa).

Mg(2+) is bound by residues Asp490 and Asp496. In terms of domain architecture, KH spans 556 to 615 (PRIETMQVPTDKIREVIGSGGKVIREIVEVSGAKVDINDDGVIKIASANGEAIQKAYDMI). The S1 motif domain occupies 625 to 693 (GAVYTGKVVK…DRGKVRLSMK (69 aa)).

Belongs to the polyribonucleotide nucleotidyltransferase family. Mg(2+) serves as cofactor.

The protein resides in the cytoplasm. The enzyme catalyses RNA(n+1) + phosphate = RNA(n) + a ribonucleoside 5'-diphosphate. Functionally, involved in mRNA degradation. Catalyzes the phosphorolysis of single-stranded polyribonucleotides processively in the 3'- to 5'-direction. The polypeptide is Polyribonucleotide nucleotidyltransferase (Ruegeria sp. (strain TM1040) (Silicibacter sp.)).